The following is a 660-amino-acid chain: Bifunctional polymyxin resistance protein ArnA (660 aa).

The segment at 1-304 (MKAVIFAYHD…TLGLVAGARL (304 aa)) is formyltransferase ArnAFT. The active-site Proton donor; for formyltransferase activity is the H104. (6R)-10-formyltetrahydrofolate is bound by residues R114 and 136–140 (VKRAD). Residues 314 to 660 (RRIRVLILGV…RSVDVAERAS (347 aa)) are dehydrogenase ArnADH. NAD(+) contacts are provided by residues D347 and 368–369 (DI). Residues A393, Y398, and 432–433 (TS) contribute to the UDP-alpha-D-glucuronate site. Residue E434 is the Proton acceptor; for decarboxylase activity of the active site. UDP-alpha-D-glucuronate-binding positions include R460, N492, 526-535 (KLIDGGQQKR), and Y613. The active-site Proton donor; for decarboxylase activity is R619.

It in the N-terminal section; belongs to the Fmt family. UDP-L-Ara4N formyltransferase subfamily. The protein in the C-terminal section; belongs to the NAD(P)-dependent epimerase/dehydratase family. UDP-glucuronic acid decarboxylase subfamily. Homohexamer, formed by a dimer of trimers.

It catalyses the reaction UDP-alpha-D-glucuronate + NAD(+) = UDP-beta-L-threo-pentopyranos-4-ulose + CO2 + NADH. The catalysed reaction is UDP-4-amino-4-deoxy-beta-L-arabinose + (6R)-10-formyltetrahydrofolate = UDP-4-deoxy-4-formamido-beta-L-arabinose + (6S)-5,6,7,8-tetrahydrofolate + H(+). It participates in nucleotide-sugar biosynthesis; UDP-4-deoxy-4-formamido-beta-L-arabinose biosynthesis; UDP-4-deoxy-4-formamido-beta-L-arabinose from UDP-alpha-D-glucuronate: step 1/3. The protein operates within nucleotide-sugar biosynthesis; UDP-4-deoxy-4-formamido-beta-L-arabinose biosynthesis; UDP-4-deoxy-4-formamido-beta-L-arabinose from UDP-alpha-D-glucuronate: step 3/3. It functions in the pathway bacterial outer membrane biogenesis; lipopolysaccharide biosynthesis. In terms of biological role, bifunctional enzyme that catalyzes the oxidative decarboxylation of UDP-glucuronic acid (UDP-GlcUA) to UDP-4-keto-arabinose (UDP-Ara4O) and the addition of a formyl group to UDP-4-amino-4-deoxy-L-arabinose (UDP-L-Ara4N) to form UDP-L-4-formamido-arabinose (UDP-L-Ara4FN). The modified arabinose is attached to lipid A and is required for resistance to polymyxin and cationic antimicrobial peptides. This chain is Bifunctional polymyxin resistance protein ArnA, found in Salmonella dublin (strain CT_02021853).